Reading from the N-terminus, the 501-residue chain is Glycerol kinase (501 aa).

T11 serves as a coordination point for ADP. T11, T12, and S13 together coordinate ATP. Position 11 (T11) interacts with sn-glycerol 3-phosphate. R15 is an ADP binding site. Residues R81, E82, Y133, and D242 each coordinate sn-glycerol 3-phosphate. Glycerol contacts are provided by R81, E82, Y133, D242, and Q243. Residues T264 and G307 each contribute to the ADP site. ATP contacts are provided by T264, G307, Q311, and G409. Residues G409 and N413 each coordinate ADP.

It belongs to the FGGY kinase family.

It carries out the reaction glycerol + ATP = sn-glycerol 3-phosphate + ADP + H(+). It functions in the pathway polyol metabolism; glycerol degradation via glycerol kinase pathway; sn-glycerol 3-phosphate from glycerol: step 1/1. Inhibited by fructose 1,6-bisphosphate (FBP). Key enzyme in the regulation of glycerol uptake and metabolism. Catalyzes the phosphorylation of glycerol to yield sn-glycerol 3-phosphate. This is Glycerol kinase from Borreliella afzelii (strain PKo) (Borrelia afzelii).